We begin with the raw amino-acid sequence, 1095 residues long: Inactive phospholipase C-like protein 1 (1095 aa).

Positions 1 to 11 are enriched in basic and acidic residues; that stretch reads MAEGAAGREDP. Residues 1–61 are disordered; that stretch reads MAEGAAGRED…PGAAGTPADS (61 aa). A phosphoserine mark is found at serine 47 and serine 77. The interval 83–222 is interaction with PPP1C; it reads SNQKCGGRKK…IWVSGLRYLV (140 aa). At threonine 93 the chain carries Phosphothreonine; by PKA. Serine 95 carries the post-translational modification Phosphoserine. Residues 113–223 form the PH domain; that stretch reads SFMQAGCELK…WVSGLRYLVS (111 aa). The region spanning 398–542 is the PI-PLC X-box domain; sequence QDMTQPLSHY…LKRMIIVKGK (145 aa). The tract at residues 543–567 is interaction with GABA A beta subunit; it reads KLPSDPDVLEGEVTDEDEEAEMSRR. Residue threonine 556 is modified to Phosphothreonine. Phosphoserine is present on serine 569. A PI-PLC Y-box domain is found at 585 to 701; that stretch reads LSDLVSICKS…GYVLRPSIMR (117 aa). Positions 701–830 constitute a C2 domain; sequence RDEVSYFSAN…PGYRHVPLRS (130 aa). 2 coiled-coil regions span residues 894–914 and 1034–1059; these read LREA…IKEL and LKGQ…QLAC. Positions 1066–1095 are disordered; the sequence is KAPSSSAEAKSKRSLEAIEEKESSEENGKL. A compositionally biased stretch (basic and acidic residues) spans 1074-1095; the sequence is AKSKRSLEAIEEKESSEENGKL. Serine 1079 carries the post-translational modification Phosphoserine.

As to quaternary structure, interacts with PPP2CA. Interacts with Ins(1,4,5)P3, Ins(1,4,5,6)P4, GABARAP, GABA receptor beta subunits, GABA receptor gamma-2 subunits and PPP1C. May form a ternary complex with GABA receptor beta subunit and GABARAP. The formation of a ternary complex with GABA receptor beta subunit and GABARAP could be the key step for facilitating the association of GABARAP with the GABA receptor gamma-2 subunit and to allow it to be transported at the right destination. Post-translationally, phosphorylated by the catalytic subunit of PKA. Phosphorylation of Thr-93 resulted in dissociation of PPP1C from PRIP1. Expressed in a variety of fetal and adult organs including brain, lung and kidney. Its expression was greatly reduced in small and non-small cell lung carcinoma. Isoform 1 is predominantly expressed in brain.

The protein localises to the cytoplasm. Functionally, involved in an inositol phospholipid-based intracellular signaling cascade. Shows no PLC activity to phosphatidylinositol 4,5-bisphosphate and phosphatidylinositol. Component in the phospho-dependent endocytosis process of GABA A receptor. Regulates the turnover of receptors and thus contributes to the maintenance of GABA-mediated synaptic inhibition. Its aberrant expression could contribute to the genesis and progression of lung carcinoma. Acts as an inhibitor of PPP1C. The chain is Inactive phospholipase C-like protein 1 (PLCL1) from Homo sapiens (Human).